A 151-amino-acid polypeptide reads, in one-letter code: Methylglyoxal synthase (151 aa).

The MGS-like domain maps to 1–151; that stretch reads MKKTTRTMAA…DYQAYLAERT (151 aa). Substrate contacts are provided by residues His19, Lys23, 45 to 48, and 65 to 66; these read TGTT and SG. Asp71 functions as the Proton donor/acceptor in the catalytic mechanism. Residue His98 participates in substrate binding.

Belongs to the methylglyoxal synthase family.

It carries out the reaction dihydroxyacetone phosphate = methylglyoxal + phosphate. In terms of biological role, catalyzes the formation of methylglyoxal from dihydroxyacetone phosphate. The protein is Methylglyoxal synthase of Vibrio cholerae serotype O1 (strain ATCC 39541 / Classical Ogawa 395 / O395).